We begin with the raw amino-acid sequence, 550 residues long: Amino acid transporter AVT1C (550 aa).

Polar residues predominate over residues 1-11; it reads MNHVPSDQSFY. 2 disordered regions span residues 1–44 and 128–148; these read MNHV…ENQA and QGLL…EKSS. Basic and acidic residues predominate over residues 20-34; the sequence is RKDYVEEDGGSHSDS. A run of 11 helical transmembrane segments spans residues 165–185, 190–210, 237–257, 283–303, 307–327, 342–362, 377–397, 422–442, 462–484, 488–510, and 521–541; these read AVLN…PYAA, WLGL…GILL, IFVS…YIIL, LFAL…DLSV, ISAG…WIGL, LSTL…HAVF, AVLL…AVMG, IAVW…ISPV, IGIR…FFGL, LIGS…LSIV, and LCVL…YSAL.

The protein belongs to the amino acid/polyamine transporter 2 family. Amino acid/auxin permease (AAAP) (TC 2.A.18.5) subfamily.

The protein resides in the membrane. In Arabidopsis thaliana (Mouse-ear cress), this protein is Amino acid transporter AVT1C.